The chain runs to 71 residues: MATRDSGGQSQTGRSQQGEEIEDVTTEASPEVAERHAEITEDVDDLLDEIDSVLEENAEEFVRGYVQKGGE.

Residues 1-18 are compositionally biased toward low complexity; that stretch reads MATRDSGGQSQTGRSQQG. The tract at residues 1–42 is disordered; that stretch reads MATRDSGGQSQTGRSQQGEEIEDVTTEASPEVAERHAEITED. The ARC ATPase binding stretch occupies residues 27 to 65; the sequence is EASPEVAERHAEITEDVDDLLDEIDSVLEENAEEFVRGY. Residues 31–60 are a coiled coil; it reads EVAERHAEITEDVDDLLDEIDSVLEENAEE. An Isoglutamyl lysine isopeptide (Glu-Lys) (interchain with K-? in acceptor proteins) cross-link involves residue Glu-71.

This sequence belongs to the prokaryotic ubiquitin-like protein family. Strongly interacts with the proteasome-associated ATPase ARC through a hydrophobic interface; the interacting region of Pup lies in its C-terminal half. There is one Pup binding site per ARC hexamer ring.

It functions in the pathway protein degradation; proteasomal Pup-dependent pathway. In terms of biological role, protein modifier that is covalently attached to lysine residues of substrate proteins, thereby targeting them for proteasomal degradation. The tagging system is termed pupylation. The chain is Prokaryotic ubiquitin-like protein Pup from Salinispora arenicola (strain CNS-205).